Reading from the N-terminus, the 509-residue chain is ATP synthase subunit alpha (509 aa).

169–176 (GDRQTGKT) contributes to the ATP binding site.

Belongs to the ATPase alpha/beta chains family. In terms of assembly, F-type ATPases have 2 components, CF(1) - the catalytic core - and CF(0) - the membrane proton channel. CF(1) has five subunits: alpha(3), beta(3), gamma(1), delta(1), epsilon(1). CF(0) has three main subunits: a(1), b(2) and c(9-12). The alpha and beta chains form an alternating ring which encloses part of the gamma chain. CF(1) is attached to CF(0) by a central stalk formed by the gamma and epsilon chains, while a peripheral stalk is formed by the delta and b chains.

Its subcellular location is the cell inner membrane. It carries out the reaction ATP + H2O + 4 H(+)(in) = ADP + phosphate + 5 H(+)(out). Produces ATP from ADP in the presence of a proton gradient across the membrane. The alpha chain is a regulatory subunit. The protein is ATP synthase subunit alpha of Paramagnetospirillum magneticum (strain ATCC 700264 / AMB-1) (Magnetospirillum magneticum).